The following is a 209-amino-acid chain: MARYCGPKNRIARRFGANIFGRSRNPLLKKPHPPGQHGMQRKKKSDYGLQLEEKQKLKACYGMILEKQLVKAFKEVINKQGSVTKMFLERFECRLDNMVYRMGFAKTIFAAQQLVSHGHVLVNGKKVDRRSFFLRPGMQVSLKEKSRKLQSVQESLENRDEGSLPSYISVDKGNFKGELLVSPEQDQIEAQLPLPVDVSVVCEFLSHRT.

A disordered region spans residues serine 23–aspartate 46. An S4 RNA-binding domain is found at cysteine 93 to leucine 156.

Belongs to the universal ribosomal protein uS4 family. In terms of assembly, part of the 30S ribosomal subunit. Contacts protein S5. The interaction surface between S4 and S5 is involved in control of translational fidelity.

One of the primary rRNA binding proteins, it binds directly to 16S rRNA where it nucleates assembly of the body of the 30S subunit. Its function is as follows. With S5 and S12 plays an important role in translational accuracy. In Chlamydia caviae (strain ATCC VR-813 / DSM 19441 / 03DC25 / GPIC) (Chlamydophila caviae), this protein is Small ribosomal subunit protein uS4.